The following is a 508-amino-acid chain: Glutamyl-tRNA(Gln) amidotransferase subunit B, mitochondrial (508 aa).

Belongs to the GatB/GatE family. GatB subfamily. Subunit of the heterotrimeric GatFAB amidotransferase (AdT) complex, composed of A, B and F subunits.

Its subcellular location is the mitochondrion. It carries out the reaction L-glutamyl-tRNA(Gln) + L-glutamine + ATP + H2O = L-glutaminyl-tRNA(Gln) + L-glutamate + ADP + phosphate + H(+). In terms of biological role, allows the formation of correctly charged Gln-tRNA(Gln) through the transamidation of misacylated Glu-tRNA(Gln) in the mitochondria. The reaction takes place in the presence of glutamine and ATP through an activated gamma-phospho-Glu-tRNA(Gln). This is Glutamyl-tRNA(Gln) amidotransferase subunit B, mitochondrial from Scheffersomyces stipitis (strain ATCC 58785 / CBS 6054 / NBRC 10063 / NRRL Y-11545) (Yeast).